Reading from the N-terminus, the 118-residue chain is Probable FK506-binding protein (118 aa).

The PPIase FKBP-type domain maps to 33-118; that stretch reads GGEVEVHYVG…LVFIIDLISA (86 aa).

Belongs to the FKBP-type PPIase family.

It carries out the reaction [protein]-peptidylproline (omega=180) = [protein]-peptidylproline (omega=0). Functionally, PPIases accelerate the folding of proteins. The chain is Probable FK506-binding protein from Corynebacterium glutamicum (strain ATCC 13032 / DSM 20300 / JCM 1318 / BCRC 11384 / CCUG 27702 / LMG 3730 / NBRC 12168 / NCIMB 10025 / NRRL B-2784 / 534).